A 706-amino-acid polypeptide reads, in one-letter code: Transmembrane and coiled-coil domains protein 2 (706 aa).

2 disordered regions span residues 1-221 and 251-280; these read MKRC…TTDT and VALSLPSGPGHGDSDGPISLDVPDGAPDPQ. S6 carries the phosphoserine modification. Residues 83 to 94 are compositionally biased toward basic residues; that stretch reads GLKHLFHSRRRS. The segment covering 102-112 has biased composition (low complexity); that stretch reads SQEAQQQQQQQ. Over residues 120-131 the composition is skewed to basic and acidic residues; the sequence is PDEKERSPEMHR. R163 is modified (omega-N-methylarginine). The stretch at 330–365 forms a coiled coil; it reads KQVFEKKNQKSAQTIAQLHKKLEHYRRRLKEIEQNG. S435 carries the post-translational modification Phosphoserine. Residues 440–459 form a disordered region; it reads AHLKDPMEDGPPEEAARALS. 2 positions are modified to phosphoserine: S461 and S467. Residues 464–510 are disordered; the sequence is LVSSPKYGSDDECSSASASSAGAGSNSGAGPGGALGSPRSNTLYGAP. A compositionally biased stretch (low complexity) spans 477-487; that stretch reads SSASASSAGAG. Residues 488–498 are compositionally biased toward gly residues; sequence SNSGAGPGGAL. S500 carries the phosphoserine modification. A coiled-coil region spans residues 511–630; the sequence is GNLDTLLEEL…QQQQVVQLEG (120 aa). Helical transmembrane passes span 646–666 and 679–699; these read VILALMAVLLVFVSTIANFIT and ALLLLVLFLLWKHWASLTYLL.

The protein belongs to the TEX28 family. May form homodimers and heterodimers with TMCC2 or TMCC3 via the coiled-coil domains. Interacts with ribosomal proteins RPL4 and RPS6. Interacts with APOE and proteolytic processed C-terminal fragment C99 of the amyloid precursor protein (APP C99).

It is found in the endoplasmic reticulum membrane. In terms of biological role, may be involved in the regulation of the proteolytic processing of the amyloid precursor protein (APP) possibly also implicating APOE. This chain is Transmembrane and coiled-coil domains protein 2, found in Mus musculus (Mouse).